Here is a 97-residue protein sequence, read N- to C-terminus: Co-chaperonin GroES (97 aa).

This sequence belongs to the GroES chaperonin family. Heptamer of 7 subunits arranged in a ring. Interacts with the chaperonin GroEL.

Its subcellular location is the cytoplasm. Functionally, together with the chaperonin GroEL, plays an essential role in assisting protein folding. The GroEL-GroES system forms a nano-cage that allows encapsulation of the non-native substrate proteins and provides a physical environment optimized to promote and accelerate protein folding. GroES binds to the apical surface of the GroEL ring, thereby capping the opening of the GroEL channel. The sequence is that of Co-chaperonin GroES from Baumannia cicadellinicola subsp. Homalodisca coagulata.